The chain runs to 403 residues: Vitamin D(3) 25-hydroxylase (403 aa).

Residue C347 coordinates heme.

The protein belongs to the cytochrome P450 family. It depends on heme as a cofactor.

The protein resides in the cytoplasm. The catalysed reaction is 5beta-cholestane-3alpha,7alpha,12alpha-triol + 6 reduced [adrenodoxin] + 3 O2 + 5 H(+) = (25R)-3alpha,7alpha,12alpha-trihydroxy-5beta-cholestan-26-oate + 6 oxidized [adrenodoxin] + 4 H2O. With respect to regulation, activated by partially methylated beta-cyclodextrin. Its function is as follows. Hydroxylates vitamin D(3) into 25-hydroxyvitamin D(3) and 1-alpha,25-dihydroxyvitamin D(3), its physiologically active forms. It first hydroxylates the C-25 position of vitamin D(3) to form 25-hydroxyvitamin D(3), then subsequently hydroxylates the C-1-alpha position to form 1-alpha,25-dihydroxyvitamin D(3). Also displays 25-hydroxylase activity on vitamin D(2) and 7-dehydrocholesterol. May play a role in the biosynthesis of steroid metabolic intermediates. In Pseudonocardia autotrophica (Amycolata autotrophica), this protein is Vitamin D(3) 25-hydroxylase.